The sequence spans 362 residues: Myricetin 3'/5'-O-methyltransferase 1 (362 aa).

Residue D229 participates in S-adenosyl-L-methionine binding. H267 acts as the Proton acceptor in catalysis.

It belongs to the class I-like SAM-binding methyltransferase superfamily. Cation-independent O-methyltransferase family. Homodimer. As to expression, mainly expressed in leaves secreting glandular trichomes types 1 and 4 and, to a lesser extent, in storage trichomes type 6.

It catalyses the reaction myricetin + S-adenosyl-L-methionine = laricitrin + S-adenosyl-L-homocysteine + H(+). It carries out the reaction laricitrin + S-adenosyl-L-methionine = syringetin + S-adenosyl-L-homocysteine + H(+). The catalysed reaction is a 3'-hydroxyflavone + S-adenosyl-L-methionine = a 3'-methoxyflavone + S-adenosyl-L-homocysteine + H(+). The enzyme catalyses a 5'-hydroxy-3'-methoxyflavone + S-adenosyl-L-methionine = a 3',5'-dimethoxyflavone + S-adenosyl-L-homocysteine + H(+). It catalyses the reaction quercetin + S-adenosyl-L-methionine = isorhamnetin + S-adenosyl-L-homocysteine + H(+). It carries out the reaction rhamnetin + S-adenosyl-L-methionine = rhamnacene + S-adenosyl-L-homocysteine + H(+). The catalysed reaction is 3',4',5,7-tetrahydroxy-3-methoxyflavone + S-adenosyl-L-methionine = 3,3'-O-dimethylquercetin + S-adenosyl-L-homocysteine + H(+). It functions in the pathway flavonoid metabolism. Its function is as follows. Flavonoid 3'/5'-O-methyltransferase involved in the biosynthesis of polymethoxylated flavonoids natural products such as myricetin derivatives, aroma compounds possessing antioxidant properties and exhibiting pharmacological activities such as anti-carcinogen, anti-viral, anti-thrombotic, anti-diabetic, anti-atherosclerotic, and anti-inflammatory effects. Catalyzes S-adenosylmethionine-dependent regioselective 3'/5'-O-methylation of flavonoids; active on various hydroxylated flavonoid substrates, including myricetin and quercetin, but inactive toward kaempferol. Mediates the formation of 3'-methyl derivatives from quercetin, myricetin, 3-methyl quercetin and 7-methyl quercetin (rhamnetin), producing 3'-methyl quercetin (isorhamnetin), 3'-methyl myricetin (laricitrin), 3,3'-dimethyl quercetin (3-O-methylisorhamnetin) and 7,3'-dimethyl quercetin (7-O-methylisorhamnetin), respectively. Triggers the 5'-O-methylation of 3'-methyl myricetin (laricitrin), thus leading to production of 3',5'-dimethyl myricetin (syringetin). The sequence is that of Myricetin 3'/5'-O-methyltransferase 1 from Solanum habrochaites (Wild tomato).